The chain runs to 409 residues: Putative lipoate-protein ligase A (409 aa).

Residues 146–330 (GPDNCRLLFY…RFQKTFKVDG (185 aa)) enclose the BPL/LPL catalytic domain. Residues Arg188, 193-196 (GTVL), and Lys249 each bind ATP. Lys249 is a binding site for (R)-lipoate.

This sequence belongs to the LplA family. Monomer.

The catalysed reaction is L-lysyl-[lipoyl-carrier protein] + (R)-lipoate + ATP = N(6)-[(R)-lipoyl]-L-lysyl-[lipoyl-carrier protein] + AMP + diphosphate + H(+). The protein operates within protein modification; protein lipoylation via exogenous pathway; protein N(6)-(lipoyl)lysine from lipoate: step 1/2. Its pathway is protein modification; protein lipoylation via exogenous pathway; protein N(6)-(lipoyl)lysine from lipoate: step 2/2. Functionally, catalyzes both the ATP-dependent activation of exogenously supplied lipoate to lipoyl-AMP and the transfer of the activated lipoyl onto the lipoyl domains of lipoate-dependent enzymes. This Saccharomyces cerevisiae (strain ATCC 204508 / S288c) (Baker's yeast) protein is Putative lipoate-protein ligase A (AIM22).